A 628-amino-acid chain; its full sequence is (+)-alpha-pinene synthase, chloroplastic (628 aa).

The transit peptide at 1-48 directs the protein to the chloroplast; that stretch reads MALVSAVPLNSKLCLRRTLFGFSHELKAIHSTVPNLGMCRGGKSIAPS. The Mg(2+) site is built by D379, D383, and D531. A DDXXD motif motif is present at residues 379 to 383; that stretch reads DDIYD. S539 lines the K(+) pocket.

It belongs to the terpene synthase family. Tpsd subfamily. It depends on Mg(2+) as a cofactor. Requires Mn(2+) as cofactor. The cofactor is K(+).

It is found in the plastid. It localises to the chloroplast. It carries out the reaction (2E)-geranyl diphosphate = (1R,5R)-alpha-pinene + diphosphate. It participates in terpene metabolism; oleoresin biosynthesis. In terms of biological role, involved in defensive oleoresin formation in conifers in response to insect attack or other injury. Involved in monoterpene (C10) olefins biosynthesis. Produces mainly (+)-alpha-pinene (97%) with a small amount of (-)-alpha-pinene (3%). The sequence is that of (+)-alpha-pinene synthase, chloroplastic (PT30) from Pinus taeda (Loblolly pine).